The chain runs to 203 residues: Na(+)-translocating NADH-quinone reductase subunit E (203 aa).

6 helical membrane-spanning segments follow: residues 12-32 (AVFV…FLAL), 36-56 (MEAA…TVPV), 82-102 (FLGL…LEMV), 115-135 (GVFL…LFMV), 145-165 (LVYG…LAGI), and 181-201 (LGIT…FSGI).

The protein belongs to the NqrDE/RnfAE family. In terms of assembly, composed of six subunits; NqrA, NqrB, NqrC, NqrD, NqrE and NqrF.

It localises to the cell inner membrane. The enzyme catalyses a ubiquinone + n Na(+)(in) + NADH + H(+) = a ubiquinol + n Na(+)(out) + NAD(+). In terms of biological role, NQR complex catalyzes the reduction of ubiquinone-1 to ubiquinol by two successive reactions, coupled with the transport of Na(+) ions from the cytoplasm to the periplasm. NqrA to NqrE are probably involved in the second step, the conversion of ubisemiquinone to ubiquinol. The chain is Na(+)-translocating NADH-quinone reductase subunit E from Hahella chejuensis (strain KCTC 2396).